Reading from the N-terminus, the 418-residue chain is MSLTTIIFDNGGHNMKIGTIDSESPRLVPNSIVKAKHEKKRVFVAHEQEECSDKFSLFYVRPIERGYVVNWDTQQQIWEKTFGSMDVEASTSRIALTDNNYLIPALPDVSSEILFDYFGFTEVHKTSASTLVAKHSNKINNEKCAVVVDSGFSWTTVASFVNGMLIQDSVIRIDVGGKALTNKLKDWVSYRQLNVSEETYVINECKEDLCFVSQNFDESMKEARNRFQENTTMKRYIMPDFHSTFRGVVKDVKEPHDPQIPSIHLGVERFAIPEILFNPSDIDIDQCGVAEAVIESICQCPEALRPALAENIIVIGGSSCFPGFRERLEREVRSMLPAEYGLNVSNDVINPQTHSWHCGQELLTASKVPWINRKDWDERGDSLEFSNFFQTLVQSDELKGTRNFDDQREKSPKEDEDF.

This sequence belongs to the actin family. ARP6 subfamily.

Its subcellular location is the cytoplasm. It is found in the cytoskeleton. The protein is Actin-like protein C08B11.6 (arp-6) of Caenorhabditis elegans.